The chain runs to 600 residues: ATP-dependent RNA helicase DDX55 (600 aa).

The Q motif motif lies at 9–37; sequence WESLPVPLHPQVLGALRELGFPYMTPVQS. The Helicase ATP-binding domain occupies 40-223; it reads IPLFMRNKDV…RAGLRNPVRV (184 aa). Residue 53–60 coordinates ATP; it reads AVTGSGKT. Residues 171–174 carry the DEAD box motif; it reads DEAD. The region spanning 254–402 is the Helicase C-terminal domain; it reads KFNQLVHFLR…EMKPQRNTAD (149 aa). Basic and acidic residues predominate over residues 500–513; sequence EQQRREKTENEGRR. The disordered stretch occupies residues 500–550; the sequence is EQQRREKTENEGRRKFIKNKAWSKQKAKKEKKKKMNEKRKREEGSDIEDED. The segment covering 514 to 537 has biased composition (basic residues); the sequence is KFIKNKAWSKQKAKKEKKKKMNEK. The tract at residues 533–562 is important for nuclear localization; that stretch reads KMNEKRKREEGSDIEDEDMEELLNDTRLLK. 2 positions are modified to phosphoserine: serine 544 and serine 594.

It belongs to the DEAD box helicase family. DDX55/SPB4 subfamily. Interacts with 28S rRNA. Interacts with double-stranded RNA substrates in vitro; the interaction stimulates ATPase activity.

The protein resides in the nucleus. Its subcellular location is the nucleoplasm. The catalysed reaction is ATP + H2O = ADP + phosphate + H(+). In terms of biological role, probable ATP-binding RNA helicase. Has ATPase activity and is involved in the maturation of precursor large subunit rRNAs. This Homo sapiens (Human) protein is ATP-dependent RNA helicase DDX55.